Here is a 96-residue protein sequence, read N- to C-terminus: Copper-sensing transcriptional repressor RicR (96 aa).

Thr-2 bears the N-acetylthreonine mark. Cu cation-binding residues include Cys-38, His-63, and Cys-67.

It belongs to the CsoR family.

The protein localises to the cytoplasm. Under low copper conditions, represses the expression of lpqS, Rv2963, mymT, socA, socB, mmcO and its own expression. In the presence of copper, RicR dissociates from DNA, leading to the expression of the target genes. Members of the RicR regulon are important for copper resistance during infections and full virulence in a mouse model of infection. In Mycobacterium tuberculosis (strain ATCC 25618 / H37Rv), this protein is Copper-sensing transcriptional repressor RicR.